The chain runs to 331 residues: Phosphoenolpyruvate transferase (331 aa).

Residue Asp-63 coordinates 7,8-didemethyl-8-hydroxy-5-deazariboflavin.

It belongs to the CofD family. In terms of assembly, homodimer. The cofactor is Mg(2+).

The catalysed reaction is enolpyruvoyl-2-diphospho-5'-guanosine + 7,8-didemethyl-8-hydroxy-5-deazariboflavin = dehydro coenzyme F420-0 + GMP + H(+). It participates in cofactor biosynthesis; coenzyme F420 biosynthesis. Its function is as follows. Catalyzes the transfer of the phosphoenolpyruvate moiety from enoylpyruvoyl-2-diphospho-5'-guanosine (EPPG) to 7,8-didemethyl-8-hydroxy-5-deazariboflavin (FO) with the formation of dehydro coenzyme F420-0 and GMP. The sequence is that of Phosphoenolpyruvate transferase from Mycobacterium sp. (strain JLS).